The sequence spans 104 residues: Protamine-2 (104 aa).

S8 and S10 each carry phosphoserine. A disordered region spans residues 23–104; sequence WQEQGRNGQE…SRRRRRCRRY (82 aa). Low complexity predominate over residues 24–35; sequence QEQGRNGQEEQG. S37 carries the post-translational modification Phosphoserine. Residues 54 to 104 show a composition bias toward basic residues; sequence YRRRRCSRRRRYRIHRRRSRSCRRRRRRSCRYRRRPRRGCRSRRRRRCRRY.

This sequence belongs to the protamine P2 family. In terms of assembly, interacts with TDRP. Post-translationally, proteolytic processing into mature chains is required for histone eviction during spermatogenesis. Transition proteins (TNP1 and TNP2) are required for processing. Testis.

It localises to the nucleus. It is found in the chromosome. Functionally, protamines substitute for histones in the chromatin of sperm during the haploid phase of spermatogenesis. They compact sperm DNA into a highly condensed, stable and inactive complex. The chain is Protamine-2 (PRM2) from Callithrix jacchus (White-tufted-ear marmoset).